Here is a 490-residue protein sequence, read N- to C-terminus: Cobyric acid synthase (490 aa).

Residues 252 to 439 enclose the GATase cobBQ-type domain; it reads RLKVVVPVLP…LHGLFESTAA (188 aa). The active-site Nucleophile is the Cys333. His431 is an active-site residue.

Belongs to the CobB/CobQ family. CobQ subfamily.

The protein operates within cofactor biosynthesis; adenosylcobalamin biosynthesis. In terms of biological role, catalyzes amidations at positions B, D, E, and G on adenosylcobyrinic A,C-diamide. NH(2) groups are provided by glutamine, and one molecule of ATP is hydrogenolyzed for each amidation. The protein is Cobyric acid synthase of Pseudomonas aeruginosa (strain LESB58).